The chain runs to 204 residues: Holliday junction resolvase RecU (204 aa).

Thr-89, Asp-91, Asp-104, and Gln-123 together coordinate Mg(2+).

This sequence belongs to the RecU family. Mg(2+) serves as cofactor.

It is found in the cytoplasm. The enzyme catalyses Endonucleolytic cleavage at a junction such as a reciprocal single-stranded crossover between two homologous DNA duplexes (Holliday junction).. Its function is as follows. Endonuclease that resolves Holliday junction intermediates in genetic recombination. Cleaves mobile four-strand junctions by introducing symmetrical nicks in paired strands. Promotes annealing of linear ssDNA with homologous dsDNA. Required for DNA repair, homologous recombination and chromosome segregation. The chain is Holliday junction resolvase RecU from Leuconostoc mesenteroides subsp. mesenteroides (strain ATCC 8293 / DSM 20343 / BCRC 11652 / CCM 1803 / JCM 6124 / NCDO 523 / NBRC 100496 / NCIMB 8023 / NCTC 12954 / NRRL B-1118 / 37Y).